The primary structure comprises 80 residues: Tripartite terminase subunit 2 (80 aa).

Belongs to the herpesviridae TRM2 protein family. In terms of assembly, associates with TRM1 and TRM3 to form the tripartite terminase complex.

The protein localises to the host nucleus. Functionally, component of the molecular motor that translocates viral genomic DNA in empty capsid during DNA packaging. Forms a tripartite terminase complex together with TRM1 and TRM3 in the host cytoplasm. Once the complex reaches the host nucleus, it interacts with the capsid portal vertex. This portal forms a ring in which genomic DNA is translocated into the capsid. In Homo sapiens (Human), this protein is Tripartite terminase subunit 2.